The following is a 278-amino-acid chain: MSERKAINKYYPPDYNPLEAEKLSRKMAKKLKTMNKSHASIRLMTPFSMRCLECNEYIPKSRKFNGKKELLKEKYLDSIKIYRLTISCPRCANSIAFRTDPGNSDYVMEVGGVRNYVPQKPNDDLNAKTAVESIDETLQRLVREKEMEQNEKMGIKEQADDKMDLLEKRLAKIQQEQEDDEELENLRKKNLEMSQRAEMINRSKHAQQEKAVTTDDLDNLVDQVFDNHRQRTNKPGNNNDEKRTPLFNPTSTKGKIQKKSSVRTNPLGIVIKRGKSLK.

Zn(2+) contacts are provided by C51, C54, C88, and C91. Positions 228–278 (HRQRTNKPGNNNDEKRTPLFNPTSTKGKIQKKSSVRTNPLGIVIKRGKSLK) are disordered. 2 consecutive short sequence motifs (nuclear localization signal) follow at residues 242 to 258 (KRTPLFNPTSTKGKIQK) and 260 to 278 (SSVRTNPLGIVIKRGKSLK).

Belongs to the CWC16 family. YJU2 subfamily. In terms of assembly, component of the spliceosome. Present in the activated B complex, the catalytically activated B* complex which catalyzes the branching, the catalytic step 1 C complex catalyzing the exon ligation, and the postcatalytic P complex containing the ligated exons (mRNA) and the excised lariat intron. Interacts (via C-terminus) with CLF1. Interacts (via N-terminus) with SYF1. Interacts with U2 snRNA; this interaction is direct. Identified in the CWC complex (or CEF1-associated complex), a spliceosome sub-complex reminiscent of a late-stage spliceosome composed of the U2, U5 and U6 snRNAs and at least BUD13, BUD31, BRR2, CDC40, CEF1, CLF1, CUS1, CWC2, CWC15, CWC21, CWC22, CWC23, CWC24, CWC25, CWC27, ECM2, HSH155, IST3, ISY1, LEA1, MSL1, NTC20, PRP8, PRP9, PRP11, PRP19, PRP21, PRP22, PRP45, PRP46, SLU7, SMB1, SMD1, SMD2, SMD3, SMX2, SMX3, SNT309, SNU114, SPP2, SYF1, SYF2, RSE1 and YJU2.

It is found in the nucleus. Part of the spliceosome which catalyzes two sequential transesterification reactions, first the excision of the non-coding intron from pre-mRNA and then the ligation of the coding exons to form the mature mRNA. Plays a role (via N-terminus) in stabilizing the structure of the spliceosome catalytic core and docking of the branch helix into the active site, producing 5'-exon and lariat intron-3'-intermediates. Further stabilizes spliceosome conformation for 3'-splice site docking (via C-terminus) promoting exon ligation. The protein is Splicing factor YJU2 of Saccharomyces cerevisiae (strain ATCC 204508 / S288c) (Baker's yeast).